We begin with the raw amino-acid sequence, 418 residues long: MGSNIHGISCTANNYLKQAWNDIKNEYEKNQTYSITLFENTLVCFMRLYNELRRKVNEEDTPCLECESLEKEFEEMQNDNDLSLFMRILRTNDTQIYSGVSGGITYTIQYVRDIDIVRVSLPGRASESITDFKGYYWYNFMEYIENINACDDVFSEYCFDDENISVQPERINTPGISDLDSDIDLSGISFIQRETNQALGLKYAPVDGDGYCLLRAILVLKQHDYSWALVSYKMQKEVYNEFIKMVDKKTIEALVDTAFYNLREDVKTLFGVDLQSDNQIQGQSSLMSWSFLFFKKQFIDSCLNNEKCILHLPEFIFNDNKNLLALDTDTSDRIKAVKNFLVVLSDSICSLFIVNSNVASISLGNESFSTDEDLEYGYLMNTGNHYDVYLPPELFAQAYKLNNKEMNAQLDYLNRYAI.

This is an uncharacterized protein from Escherichia coli (strain K12).